The primary structure comprises 1075 residues: MTTANCGAHDELDFKLVFGEDGAPAPPPPGSRPADLEPDDCASIYIFNVDPPPSTLTTPLCLPHHGLPSHSSVLSPSFQLQSHKNYEGTCEIPESKYSPLGGPKPFECPSIQITSISPNCHQELDAHEDDLQINDPEREFLERPSRDHLYLPLEPSYRESSLSPSPASSISSRSWFSDASSCESLSHIYDDVDSELNEAAARFTLGSPLTSPGGSPGGCPGEETWHQQYGLGHSLSPRQSPCHSPRSSVTDENWLSPRPASGPSSRPTSPCGKRRHSSAEVCYAGSLSPHHSPVPSPGHSPRGSVTEDTWLNASVHGGSGLGPAVFPFQYCVETDIPLKTRKTSEDQAAILPGKLELCSDDQGSLSPARETSIDDGLGSQYPLKKDSCGDQFLSVPSPFTWSKPKPGHTPIFRTSSLPPLDWPLPAHFGQCELKIEVQPKTHHRAHYETEGSRGAVKASTGGHPVVKLLGYNEKPINLQMFIGTADDRYLRPHAFYQVHRITGKTVATASQEIIIASTKVLEIPLLPENNMSASIDCAGILKLRNSDIELRKGETDIGRKNTRVRLVFRVHIPQPSGKVLSLQIASIPVECSQRSAQELPHIEKYSINSCSVNGGHEMVVTGSNFLPESKIIFLEKGQDGRPQWEVEGKIIREKCQGAHIVLEVPPYHNPAVTAAVQVHFYLCNGKRKKSQSQRFTYTPVLMKQEHREEIDLSSVPSLPVPHPAQTQRPSSDSGCSHDSVLSGQRSLICSIPQTYASMVTSSHLPQLQCRDESVSKEQHMIPSPIVHQPFQVTPTPPVGSSYQPMQTNVVYNGPTCLPINAASSQEFDSVLFQQDATLSGLVNLGCQPLSSIPFHSSNSGSTGHLLAHTPHSVHTLPHLQSMGYHCSNTGQRSLSSPVADQITGQPSSQLQPITYGPSHSGSATTASPAASHPLASSPLSGPPSPQLQPMPYQSPSSGTASSPSPATRMHSGQHSTQAQSTGQGGLSAPSSLICHSLCDPASFPPDGATVSIKPEPEDREPNFATIGLQDITLDDVNEIIGRDMSQISVSQGAGVSRQAPLPSPESLDLGRSDGL.

An N-acetylthreonine modification is found at Thr2. Residues 18 to 37 (FGEDGAPAPPPPGSRPADLE) are disordered. The tract at residues 109-114 (PSIQIT) is calcineurin-binding. The segment at 205–306 (LGSPLTSPGG…PGHSPRGSVT (102 aa)) is disordered. 2 consecutive repeat copies span residues 207 to 223 (SPLT…PGEE) and 236 to 252 (SPRQ…VTDE). The 3 X SP repeats stretch occupies residues 207-308 (SPLTSPGGSP…HSPRGSVTED (102 aa)). Polar residues predominate over residues 236–253 (SPRQSPCHSPRSSVTDEN). A compositionally biased stretch (low complexity) spans 256–270 (SPRPASGPSSRPTSP). Residues 273–275 (KRR) carry the Nuclear localization signal motif. Repeat 3 spans residues 292 to 308 (SPVPSPGHSPRGSVTED). Phosphoserine occurs at positions 344 and 372. Residues 415-596 (SSLPPLDWPL…IPVECSQRSA (182 aa)) enclose the RHD domain. Residues 444–451 (RAHYETEG) mediate DNA binding. The Nuclear localization signal signature appears at 686–688 (KRK). Disordered regions lie at residues 711–739 (DLSS…SHDS) and 887–988 (SNTG…GLSA). Composition is skewed to polar residues over residues 724 to 739 (AQTQ…SHDS) and 887 to 912 (SNTG…QLQP). Composition is skewed to low complexity over residues 916 to 939 (GPSH…SSPL) and 949 to 967 (PMPY…SPAT). A compositionally biased stretch (polar residues) spans 970 to 981 (HSGQHSTQAQST). The Nuclear export signal signature appears at 1032 to 1041 (TLDDVNEIIG). Residues 1049-1075 (VSQGAGVSRQAPLPSPESLDLGRSDGL) form a disordered region. Residues Ser1063 and Ser1066 each carry the phosphoserine modification.

In terms of assembly, NFATC proteins bind to DNA as monomers. Member of the multicomponent NFATC transcription complex that consists of at least two components, a pre-existing cytoplasmic component NFATC2 and an inducible nuclear component NFATC1. Other members such as NFATC4, or members of the activating protein-1 family, MAF, GATA4 and Cbp/p300 can also bind the complex. Component of a promoter-binding complex composed of STAT3, NFATC3 and NFATC4; complex formation is enhanced by calcineurin. Interacts with TRIM17; this interaction prevents NFATC3 nuclear localization. Interacts with and ubiquitinated by STUB1/CHIP; HSPA1A/HSP70 is required as a co-chaperone. Ubiquitinated by STUB1/CHIP, leading to proteasomal degradation. In terms of processing, phosphorylated by NFATC-kinase; dephosphorylated by calcineurin. Predominantly expressed in thymus and is also found in peripheral blood leukocytes and kidney. As to expression, predominantly expressed in skeletal muscle. Also found weakly expressed in the thymus, kidney, testis, spleen, prostate, ovary, small intestine, heart, placenta and pancreas. In terms of tissue distribution, expressed in thymus and kidney. Expressed in thymus and skeletal muscle.

It localises to the cytoplasm. The protein resides in the nucleus. Acts as a regulator of transcriptional activation. Binds to the TNFSF11/RANKL promoter region and promotes TNFSF11 transcription. Binding to the TNFSF11 promoter region is increased by high levels of Ca(2+) which induce NFATC3 expression and may lead to regulation of TNFSF11 expression in osteoblasts. Plays a role in promoting mesenteric arterial wall remodeling in response to the intermittent hypoxia-induced increase in EDN1 and ROCK signaling. As a result NFATC3 colocalizes with F-actin filaments, translocates to the nucleus and promotes transcription of the smooth muscle hypertrophy and differentiation marker ACTA2. Promotes lipopolysaccharide-induced apoptosis and hypertrophy in cardiomyocytes. Following JAK/STAT signaling activation and as part of a complex with NFATC4 and STAT3, binds to the alpha-beta E4 promoter region of CRYAB and activates transcription in cardiomyocytes. In conjunction with NFATC4, involved in embryonic heart development via maintenance of cardiomyocyte survival, proliferation and differentiation. Plays a role in the inducible expression of cytokine genes in T-cells, especially in the induction of the IL-2. Required for thymocyte maturation during DN3 to DN4 transition and during positive selection. Positively regulates macrophage-derived polymicrobial clearance, via binding to the promoter region and promoting transcription of NOS2 resulting in subsequent generation of nitric oxide. Involved in Ca(2+)-mediated transcriptional responses upon Ca(2+) influx via ORAI1 CRAC channels. The protein is Nuclear factor of activated T-cells, cytoplasmic 3 of Homo sapiens (Human).